The chain runs to 164 residues: MSQSICSTGLRWLWLVVVVLIIDLGSKYLILQNFALGDTVPLFPSLNLHYARNYGAAFSFLADSGGWQRWFFAGIAIGISVILAVMMYRSKATQKLNNIAYALIIGGALGNLFDRLWHGFVVDMIDFYVGDWHFATFNLADTAICVGAALIVLEGFLPSKAKKQ.

3 helical membrane passes run 12–32 (WLWLVVVVLIIDLGSKYLILQ), 70–90 (WFFAGIAIGISVILAVMMYRS), and 102–122 (ALIIGGALGNLFDRLWHGFVV). Catalysis depends on residues Asp-123 and Asp-141. A helical transmembrane segment spans residues 137 to 157 (FNLADTAICVGAALIVLEGFL).

This sequence belongs to the peptidase A8 family.

Its subcellular location is the cell inner membrane. The enzyme catalyses Release of signal peptides from bacterial membrane prolipoproteins. Hydrolyzes -Xaa-Yaa-Zaa-|-(S,diacylglyceryl)Cys-, in which Xaa is hydrophobic (preferably Leu), and Yaa (Ala or Ser) and Zaa (Gly or Ala) have small, neutral side chains.. The protein operates within protein modification; lipoprotein biosynthesis (signal peptide cleavage). This protein specifically catalyzes the removal of signal peptides from prolipoproteins. The protein is Lipoprotein signal peptidase of Escherichia coli O9:H4 (strain HS).